We begin with the raw amino-acid sequence, 186 residues long: NADH-quinone oxidoreductase subunit B (186 aa).

Residues cysteine 44, cysteine 45, cysteine 110, and cysteine 139 each contribute to the [4Fe-4S] cluster site.

It belongs to the complex I 20 kDa subunit family. NDH-1 is composed of 14 different subunits. Subunits NuoB, C, D, E, F, and G constitute the peripheral sector of the complex. The cofactor is [4Fe-4S] cluster.

It is found in the cell inner membrane. The enzyme catalyses a quinone + NADH + 5 H(+)(in) = a quinol + NAD(+) + 4 H(+)(out). Its function is as follows. NDH-1 shuttles electrons from NADH, via FMN and iron-sulfur (Fe-S) centers, to quinones in the respiratory chain. The immediate electron acceptor for the enzyme in this species is believed to be ubiquinone. Couples the redox reaction to proton translocation (for every two electrons transferred, four hydrogen ions are translocated across the cytoplasmic membrane), and thus conserves the redox energy in a proton gradient. This Leptospira interrogans serogroup Icterohaemorrhagiae serovar copenhageni (strain Fiocruz L1-130) protein is NADH-quinone oxidoreductase subunit B.